Here is a 262-residue protein sequence, read N- to C-terminus: Ornithine carbamoyltransferase (262 aa).

Carbamoyl phosphate is bound by residues serine 3 to arginine 7, glutamine 30, arginine 54, and histidine 81 to glutamine 84. L-ornithine-binding positions include asparagine 114, aspartate 178, and serine 182 to methionine 183. Carbamoyl phosphate contacts are provided by residues histidine 219 to proline 222 and threonine 247.

This sequence belongs to the aspartate/ornithine carbamoyltransferase superfamily. OTCase family.

It is found in the cytoplasm. It catalyses the reaction carbamoyl phosphate + L-ornithine = L-citrulline + phosphate + H(+). It functions in the pathway amino-acid biosynthesis; L-arginine biosynthesis; L-arginine from L-ornithine and carbamoyl phosphate: step 1/3. The protein operates within amino-acid degradation; L-arginine degradation via ADI pathway; carbamoyl phosphate from L-arginine: step 2/2. Its function is as follows. Reversibly catalyzes the transfer of the carbamoyl group from carbamoyl phosphate (CP) to the N(epsilon) atom of ornithine (ORN) to produce L-citrulline. The polypeptide is Ornithine carbamoyltransferase (argF) (Neisseria meningitidis).